A 311-amino-acid polypeptide reads, in one-letter code: Metal-staphylopine import system permease protein CntB (311 aa).

Transmembrane regions (helical) follow at residues 9–29 (IALM…LTYI), 105–125 (LTII…VVSA), 139–159 (VAFF…IIYV), 173–193 (GPES…GIYF), 237–257 (IFCM…YIFA), and 274–294 (FPVI…FNTL). The ABC transmembrane type-1 domain maps to 99 to 295 (FMNTLKLTII…VLFIVFNTLA (197 aa)).

It belongs to the binding-protein-dependent transport system permease family. The complex is composed of two ATP-binding proteins (CntD and CntF), two transmembrane proteins (CntB and CntC) and a solute-binding protein (CntA).

The protein localises to the cell membrane. Part of the ABC transporter complex CntABCDF (Opp1) involved in the uptake of metal in complex with the metallophore staphylopine (StP). May be involved in the import of a large array of divalent metals ions such as nickel, cobalt, zinc, copper and iron. Probably responsible for the translocation of the substrate across the membrane. The sequence is that of Metal-staphylopine import system permease protein CntB from Staphylococcus aureus (strain Mu50 / ATCC 700699).